Reading from the N-terminus, the 436-residue chain is UDP-N-acetylmuramate--L-alanine ligase (436 aa).

108–114 contributes to the ATP binding site; the sequence is GAHGKTS.

The protein belongs to the MurCDEF family.

It localises to the cytoplasm. It carries out the reaction UDP-N-acetyl-alpha-D-muramate + L-alanine + ATP = UDP-N-acetyl-alpha-D-muramoyl-L-alanine + ADP + phosphate + H(+). It participates in cell wall biogenesis; peptidoglycan biosynthesis. Its function is as follows. Cell wall formation. This is UDP-N-acetylmuramate--L-alanine ligase from Bacillus cereus (strain G9842).